A 246-amino-acid polypeptide reads, in one-letter code: uncharacterized protein (246 aa).

Disordered regions lie at residues 9 to 125 (CSRV…GAMA) and 155 to 203 (QPVR…EEKA). Basic residues predominate over residues 27–37 (GTRRQRQRPRQ). 2 stretches are compositionally biased toward pro residues: residues 54-64 (PRPPTGPPARY) and 101-117 (EPRP…PPGS). A compositionally biased stretch (basic residues) spans 161-176 (KLPKGKGRLRRPRQSR). At T179 the chain carries Phosphothreonine. S196, S210, and S220 each carry phosphoserine.

It is found in the cytoplasm. This is an uncharacterized protein from Mus musculus (Mouse).